Consider the following 497-residue polypeptide: Glutathione hydrolase 6 (497 aa).

The tract at residues Met1–Ala34 is disordered. Topologically, residues Met1–Glu51 are cytoplasmic. Acidic residues predominate over residues Val20–Ala34. A helical; Signal-anchor for type II membrane protein membrane pass occupies residues Val52–Ser72. At Ser73–Tyr497 the chain is on the extracellular side. 4 N-linked (GlcNAc...) asparagine glycosylation sites follow: Asn164, Asn169, Asn367, and Asn378.

This sequence belongs to the gamma-glutamyltransferase family. As to quaternary structure, heterodimer composed of the light and heavy chains. The active site is located in the light chain. Cleaved by autocatalysis into a large and a small subunit and the autocatalytic cleavage is essential to the functional activation of the enzyme.

Its subcellular location is the membrane. It carries out the reaction an N-terminal (5-L-glutamyl)-[peptide] + an alpha-amino acid = 5-L-glutamyl amino acid + an N-terminal L-alpha-aminoacyl-[peptide]. The enzyme catalyses glutathione + H2O = L-cysteinylglycine + L-glutamate. It catalyses the reaction an S-substituted glutathione + H2O = an S-substituted L-cysteinylglycine + L-glutamate. It participates in sulfur metabolism; glutathione metabolism. Functionally, hydrolyzes and transfers gamma-glutamyl moieties from glutathione and other gamma-glutamyl compounds to acceptors. In Mus musculus (Mouse), this protein is Glutathione hydrolase 6.